The chain runs to 244 residues: Probable transcriptional regulatory protein DMR_30850 (244 aa).

Belongs to the TACO1 family.

It localises to the cytoplasm. In Solidesulfovibrio magneticus (strain ATCC 700980 / DSM 13731 / RS-1) (Desulfovibrio magneticus), this protein is Probable transcriptional regulatory protein DMR_30850.